We begin with the raw amino-acid sequence, 77 residues long: Tachyplesin-2 (77 aa).

An N-terminal signal peptide occupies residues Met1–Ala23. Disulfide bonds link Cys26–Cys39 and Cys30–Cys35. Arg40 is subject to Arginine amide. Positions Gly41–Glu77 are excised as a propeptide.

It belongs to the tachyplesin/polyphemusin family. Hemocytes.

It localises to the secreted. Functionally, significantly inhibits the growth of Gram-negative and Gram-positive bacteria. This chain is Tachyplesin-2, found in Tachypleus tridentatus (Japanese horseshoe crab).